The chain runs to 412 residues: Dihydrolipoyllysine-residue acetyltransferase component of pyruvate dehydrogenase complex (412 aa).

Positions 2–78 (PIKILMPVLS…PVNSLIAVLS (77 aa)) constitute a Lipoyl-binding domain. Lys43 bears the N6-lipoyllysine mark. The region spanning 132–169 (FASPLAKRLAKMGNIRLESVKGSGPHGRIVKQDILSYT) is the Peripheral subunit-binding (PSBD) domain. The active site involves His385.

It belongs to the 2-oxoacid dehydrogenase family. In terms of assembly, forms a 24-polypeptide structural core with octahedral symmetry. The cofactor is (R)-lipoate.

It carries out the reaction N(6)-[(R)-dihydrolipoyl]-L-lysyl-[protein] + acetyl-CoA = N(6)-[(R)-S(8)-acetyldihydrolipoyl]-L-lysyl-[protein] + CoA. Functionally, the pyruvate dehydrogenase complex catalyzes the overall conversion of pyruvate to acetyl-CoA and CO(2). It contains multiple copies of three enzymatic components: pyruvate dehydrogenase (E1), dihydrolipoamide acetyltransferase (E2) and lipoamide dehydrogenase (E3). The protein is Dihydrolipoyllysine-residue acetyltransferase component of pyruvate dehydrogenase complex (pdhC) of Rickettsia felis (strain ATCC VR-1525 / URRWXCal2) (Rickettsia azadi).